The chain runs to 479 residues: Replication factor C large subunit (479 aa).

An ATP-binding site is contributed by 50–57; the sequence is GPPGSGKT. Residues 420-468 show a composition bias toward basic and acidic residues; it reads EKIRKERKEEEKVEVREEKPEEKVEEKREERETKKEKEKKEEKKAEKKG. The segment at 420-479 is disordered; it reads EKIRKERKEEEKVEVREEKPEEKVEEKREERETKKEKEKKEEKKAEKKGKQVTLFDFIKK.

This sequence belongs to the activator 1 small subunits family. RfcL subfamily. As to quaternary structure, heterohexamer composed of four small subunits (RfcS) and two large subunits (RfcL).

In terms of biological role, part of the RFC clamp loader complex which loads the PCNA sliding clamp onto DNA. The complex possesses DNA-independent ATPase activity. This Pyrococcus abyssi (strain GE5 / Orsay) protein is Replication factor C large subunit (rfcL).